Reading from the N-terminus, the 407-residue chain is uncharacterized protein (407 aa).

A run of 11 helical transmembrane segments spans residues 13–30 (IVFT…SPFL), 40–62 (VTPL…YYVL), 67–89 (ILGM…YNII), 118–140 (LAFA…VFSG), 147–169 (VYER…IRRL), 179–199 (AVGL…YYNY), 253–271 (WISG…SVFV), 281–303 (TEII…FGPL), 334–356 (GYLI…EIIA), 361–378 (AFAF…LVSF), and 385–402 (QFLV…IVLF).

It is found in the cell membrane. This is an uncharacterized protein from Aquifex aeolicus (strain VF5).